A 226-amino-acid polypeptide reads, in one-letter code: Uracil-DNA glycosylase (226 aa).

Asp64 (proton acceptor) is an active-site residue.

Belongs to the uracil-DNA glycosylase (UDG) superfamily. UNG family.

Its subcellular location is the cytoplasm. The enzyme catalyses Hydrolyzes single-stranded DNA or mismatched double-stranded DNA and polynucleotides, releasing free uracil.. Functionally, excises uracil residues from the DNA which can arise as a result of misincorporation of dUMP residues by DNA polymerase or due to deamination of cytosine. This Photorhabdus laumondii subsp. laumondii (strain DSM 15139 / CIP 105565 / TT01) (Photorhabdus luminescens subsp. laumondii) protein is Uracil-DNA glycosylase.